The following is a 182-amino-acid chain: Ribosome maturation factor RimM (182 aa).

A PRC barrel domain is found at 103-182 (EDEFYWRELF…RIEVDWDPGF (80 aa)).

Belongs to the RimM family. Binds ribosomal protein uS19.

The protein localises to the cytoplasm. An accessory protein needed during the final step in the assembly of 30S ribosomal subunit, possibly for assembly of the head region. Essential for efficient processing of 16S rRNA. May be needed both before and after RbfA during the maturation of 16S rRNA. It has affinity for free ribosomal 30S subunits but not for 70S ribosomes. The chain is Ribosome maturation factor RimM from Vibrio vulnificus (strain CMCP6).